Here is a 186-residue protein sequence, read N- to C-terminus: Ribosome-recycling factor (186 aa).

It belongs to the RRF family.

The protein localises to the cytoplasm. In terms of biological role, responsible for the release of ribosomes from messenger RNA at the termination of protein biosynthesis. May increase the efficiency of translation by recycling ribosomes from one round of translation to another. This chain is Ribosome-recycling factor, found in Bartonella quintana (strain Toulouse) (Rochalimaea quintana).